Here is a 489-residue protein sequence, read N- to C-terminus: Squalene monooxygenase (489 aa).

The chain crosses the membrane as a helical span at residues 10 to 30 (VTYDALIVGAGVIGPCVATAL). FAD-binding positions include 21-22 (VI), 41-42 (ER), Arg-49, Arg-151, Val-167, Asp-328, and Met-341. 2 consecutive transmembrane segments (helical) span residues 426–446 (FLAGVLPKPLLLTRVFFAVAF) and 464–484 (ALLEGIMILITAIKVFTPFLV).

This sequence belongs to the squalene monooxygenase family. The cofactor is FAD.

The protein localises to the microsome membrane. The protein resides in the endoplasmic reticulum membrane. The catalysed reaction is squalene + reduced [NADPH--hemoprotein reductase] + O2 = (S)-2,3-epoxysqualene + oxidized [NADPH--hemoprotein reductase] + H2O + H(+). It functions in the pathway terpene metabolism; lanosterol biosynthesis; lanosterol from farnesyl diphosphate: step 2/3. Functionally, catalyzes the stereospecific oxidation of squalene to (S)-2,3-epoxysqualene, and is considered to be a rate-limiting enzyme in steroid biosynthesis. This is Squalene monooxygenase (ERG1) from Candida glabrata (strain ATCC 2001 / BCRC 20586 / JCM 3761 / NBRC 0622 / NRRL Y-65 / CBS 138) (Yeast).